The following is a 408-amino-acid chain: Probable medium-chain specific acyl-CoA dehydrogenase 2, mitochondrial (408 aa).

A mitochondrion-targeting transit peptide spans 1 to 5; sequence MLSRL. Residues 143-152 and 176-178 each bind FAD; these read YCVTEPGAGS and WIT. Residue Ser152 participates in substrate binding. 263–266 is a binding site for substrate; sequence DMTR. FAD contacts are provided by residues 291–293, 301–302, and 355–359; these read RKA, HQ, and MLFRC. Glu382 functions as the Proton acceptor in the catalytic mechanism. Gly383 is a substrate binding site. Residue 384 to 386 coordinates FAD; it reads TSQ. Substrate is bound at residue Arg394.

It belongs to the acyl-CoA dehydrogenase family. As to quaternary structure, homotetramer. FAD serves as cofactor.

It localises to the mitochondrion matrix. It carries out the reaction a medium-chain 2,3-saturated fatty acyl-CoA + oxidized [electron-transfer flavoprotein] + H(+) = a medium-chain (2E)-enoyl-CoA + reduced [electron-transfer flavoprotein]. Its pathway is lipid metabolism; mitochondrial fatty acid beta-oxidation. Functionally, this enzyme is specific for acyl chain lengths of 4 to 16. The chain is Probable medium-chain specific acyl-CoA dehydrogenase 2, mitochondrial from Caenorhabditis briggsae.